A 701-amino-acid polypeptide reads, in one-letter code: Polyribonucleotide nucleotidyltransferase (701 aa).

Residues Asp487 and Asp493 each contribute to the Mg(2+) site. The region spanning 554–613 is the KH domain; that stretch reads PTMIAMKIDTDKIRDVIGKGGATIRAICEETKASIDIEDDGSIKIFGETKEAADAAKQRI. The region spanning 623 to 691 is the S1 motif domain; sequence GKIYVGKVER…NRGRIKLSIK (69 aa).

This sequence belongs to the polyribonucleotide nucleotidyltransferase family. In terms of assembly, component of the RNA degradosome, which is a multiprotein complex involved in RNA processing and mRNA degradation. Requires Mg(2+) as cofactor.

Its subcellular location is the cytoplasm. It catalyses the reaction RNA(n+1) + phosphate = RNA(n) + a ribonucleoside 5'-diphosphate. In terms of biological role, involved in mRNA degradation. Catalyzes the phosphorolysis of single-stranded polyribonucleotides processively in the 3'- to 5'-direction. This is Polyribonucleotide nucleotidyltransferase from Pseudomonas entomophila (strain L48).